A 159-amino-acid polypeptide reads, in one-letter code: Ribosomal RNA large subunit methyltransferase H (159 aa).

S-adenosyl-L-methionine contacts are provided by residues Leu76, Gly108, and Phe127 to Phe132.

This sequence belongs to the RNA methyltransferase RlmH family. In terms of assembly, homodimer.

The protein resides in the cytoplasm. The enzyme catalyses pseudouridine(1915) in 23S rRNA + S-adenosyl-L-methionine = N(3)-methylpseudouridine(1915) in 23S rRNA + S-adenosyl-L-homocysteine + H(+). Functionally, specifically methylates the pseudouridine at position 1915 (m3Psi1915) in 23S rRNA. The polypeptide is Ribosomal RNA large subunit methyltransferase H (Clostridium botulinum (strain Kyoto / Type A2)).